The chain runs to 424 residues: Serpin-Z2A (424 aa).

An RCL region spans residues 370 to 394; that stretch reads GTEAAASTACTIRLLSMSYPEDFVA.

This sequence belongs to the serpin family.

Its function is as follows. Probable serine protease inhibitor. This chain is Serpin-Z2A, found in Oryza sativa subsp. japonica (Rice).